A 158-amino-acid chain; its full sequence is Ankyrin repeat domain-containing protein 37 (158 aa).

ANK repeat units follow at residues 1–25 (MLLLDCNPEVDGLKHLLETGASVNA), 30–59 (CKQSPVHLAAGSGLACFLLWQLQTGADLNQ), and 63–92 (LGEAPLHKAAKVGSLECLSLLVASDAQIDL). A Nuclear localization signal motif is present at residues 129 to 149 (EHPDRNDCVAVLRQKRSLGSV).

Post-translationally, ubiquitinated by the CRL2(FEM1B) complex, leading to its degradation. As to expression, mainly expressed in testis, small intestine, colon, blood leukocytes and in pancreatic adenocarcinoma cells.

The protein localises to the nucleus. It localises to the cytoplasm. The chain is Ankyrin repeat domain-containing protein 37 from Homo sapiens (Human).